The chain runs to 296 residues: Protoheme IX farnesyltransferase 2 (296 aa).

A run of 9 helical transmembrane segments spans residues 7-27 (LLVA…GGYF), 36-56 (PMLL…GCVL), 83-103 (LKAA…LLWW), 108-128 (LTTA…SLWF), 134-154 (YGTL…YCAV), 163-183 (ASLL…IAIF), 207-227 (IHIV…CLGG), 229-249 (AGYG…AIAL), and 265-285 (FAFS…DFQV).

It belongs to the UbiA prenyltransferase family. Protoheme IX farnesyltransferase subfamily.

It localises to the cell inner membrane. The enzyme catalyses heme b + (2E,6E)-farnesyl diphosphate + H2O = Fe(II)-heme o + diphosphate. It functions in the pathway porphyrin-containing compound metabolism; heme O biosynthesis; heme O from protoheme: step 1/1. Its function is as follows. Converts heme B (protoheme IX) to heme O by substitution of the vinyl group on carbon 2 of heme B porphyrin ring with a hydroxyethyl farnesyl side group. This is Protoheme IX farnesyltransferase 2 from Pseudomonas paraeruginosa (strain DSM 24068 / PA7) (Pseudomonas aeruginosa (strain PA7)).